The chain runs to 503 residues: ATP synthase subunit alpha (503 aa).

ATP is bound at residue 170 to 177; the sequence is GDRQTGKT.

Belongs to the ATPase alpha/beta chains family. As to quaternary structure, F-type ATPases have 2 components, CF(1) - the catalytic core - and CF(0) - the membrane proton channel. CF(1) has five subunits: alpha(3), beta(3), gamma(1), delta(1), epsilon(1). CF(0) has three main subunits: a(1), b(2) and c(9-12). The alpha and beta chains form an alternating ring which encloses part of the gamma chain. CF(1) is attached to CF(0) by a central stalk formed by the gamma and epsilon chains, while a peripheral stalk is formed by the delta and b chains.

Its subcellular location is the cell inner membrane. The enzyme catalyses ATP + H2O + 4 H(+)(in) = ADP + phosphate + 5 H(+)(out). Produces ATP from ADP in the presence of a proton gradient across the membrane. The alpha chain is a regulatory subunit. The chain is ATP synthase subunit alpha from Thermotoga maritima (strain ATCC 43589 / DSM 3109 / JCM 10099 / NBRC 100826 / MSB8).